The primary structure comprises 360 residues: Photosystem II protein D1 1 (360 aa).

The next 3 helical transmembrane spans lie at 29–46 (YVGW…AATV), 118–133 (HFLI…QWEL), and 142–156 (WICV…SATA). His-118 serves as a coordination point for chlorophyll a. Tyr-126 provides a ligand contact to pheophytin a. Residues Asp-170 and Glu-189 each coordinate [CaMn4O5] cluster. A helical transmembrane segment spans residues 197–218 (FHMLGVAGVFGGSLFSAMHGSL). His-198 is a binding site for chlorophyll a. A quinone is bound by residues His-215 and 264 to 265 (SF). His-215 is a Fe cation binding site. Fe cation is bound at residue His-272. A helical transmembrane segment spans residues 274-288 (FLAAWPVIGIWFTAL). [CaMn4O5] cluster is bound by residues His-332, Glu-333, Asp-342, and Ala-344. The propeptide occupies 345–360 (AGEVAPVALTAPAING).

It belongs to the reaction center PufL/M/PsbA/D family. In terms of assembly, PSII is composed of 1 copy each of membrane proteins PsbA, PsbB, PsbC, PsbD, PsbE, PsbF, PsbH, PsbI, PsbJ, PsbK, PsbL, PsbM, PsbT, PsbX, PsbY, PsbZ, Psb30/Ycf12, peripheral proteins PsbO, CyanoQ (PsbQ), PsbU, PsbV and a large number of cofactors. It forms dimeric complexes. It depends on The D1/D2 heterodimer binds P680, chlorophylls that are the primary electron donor of PSII, and subsequent electron acceptors. It shares a non-heme iron and each subunit binds pheophytin, quinone, additional chlorophylls, carotenoids and lipids. D1 provides most of the ligands for the Mn4-Ca-O5 cluster of the oxygen-evolving complex (OEC). There is also a Cl(-1) ion associated with D1 and D2, which is required for oxygen evolution. The PSII complex binds additional chlorophylls, carotenoids and specific lipids. as a cofactor. In terms of processing, tyr-161 forms a radical intermediate that is referred to as redox-active TyrZ, YZ or Y-Z. C-terminally processed by CtpA; processing is essential to allow assembly of the oxygen-evolving complex and thus photosynthetic growth.

It localises to the cellular thylakoid membrane. The enzyme catalyses 2 a plastoquinone + 4 hnu + 2 H2O = 2 a plastoquinol + O2. In terms of biological role, photosystem II (PSII) is a light-driven water:plastoquinone oxidoreductase that uses light energy to abstract electrons from H(2)O, generating O(2) and a proton gradient subsequently used for ATP formation. It consists of a core antenna complex that captures photons, and an electron transfer chain that converts photonic excitation into a charge separation. The D1/D2 (PsbA/PsbD) reaction center heterodimer binds P680, the primary electron donor of PSII as well as several subsequent electron acceptors. This is Photosystem II protein D1 1 from Nostoc sp. (strain PCC 7120 / SAG 25.82 / UTEX 2576).